The primary structure comprises 321 residues: GTP 3',8-cyclase (321 aa).

Residues 5–233 (SFNRVIDYIR…QGSSKIYTLE (229 aa)) form the Radical SAM core domain. Arg14 contributes to the GTP binding site. 2 residues coordinate [4Fe-4S] cluster: Cys21 and Cys25. Tyr27 lines the S-adenosyl-L-methionine pocket. Cys28 contributes to the [4Fe-4S] cluster binding site. Arg64 is a binding site for GTP. Gly68 provides a ligand contact to S-adenosyl-L-methionine. Ser95 contacts GTP. Residue Ser119 coordinates S-adenosyl-L-methionine. Lys155 is a GTP binding site. Met189 serves as a coordination point for S-adenosyl-L-methionine. [4Fe-4S] cluster contacts are provided by Cys249 and Cys252. 254-256 (RIR) is a binding site for GTP. Cys266 is a binding site for [4Fe-4S] cluster.

Belongs to the radical SAM superfamily. MoaA family. In terms of assembly, monomer and homodimer. Requires [4Fe-4S] cluster as cofactor.

The catalysed reaction is GTP + AH2 + S-adenosyl-L-methionine = (8S)-3',8-cyclo-7,8-dihydroguanosine 5'-triphosphate + 5'-deoxyadenosine + L-methionine + A + H(+). It functions in the pathway cofactor biosynthesis; molybdopterin biosynthesis. Catalyzes the cyclization of GTP to (8S)-3',8-cyclo-7,8-dihydroguanosine 5'-triphosphate. The sequence is that of GTP 3',8-cyclase from Helicobacter pylori (strain ATCC 700392 / 26695) (Campylobacter pylori).